Reading from the N-terminus, the 136-residue chain is Ribosome-binding factor A (136 aa).

The protein belongs to the RbfA family. As to quaternary structure, monomer. Binds 30S ribosomal subunits, but not 50S ribosomal subunits or 70S ribosomes.

The protein localises to the cytoplasm. Functionally, one of several proteins that assist in the late maturation steps of the functional core of the 30S ribosomal subunit. Associates with free 30S ribosomal subunits (but not with 30S subunits that are part of 70S ribosomes or polysomes). Required for efficient processing of 16S rRNA. May interact with the 5'-terminal helix region of 16S rRNA. The protein is Ribosome-binding factor A of Rhodopseudomonas palustris (strain BisB5).